Consider the following 1193-residue polypeptide: Pyruvate carboxylase (1193 aa).

The 453-residue stretch at 41–493 (QFQKILVANR…WTTFIDDTTE (453 aa)) folds into the Biotin carboxylation domain. Residues Lys159, Glu243, and His278 each coordinate ATP. An ATP-grasp domain is found at 163-360 (RQLAIRCNVP…IVAAQIQIAA (198 aa)). The active site involves Arg335. The 269-residue stretch at 579 to 847 (CLIMDTTWRD…DPGLNSAHVR (269 aa)) folds into the Pyruvate carboxyltransferase domain. Substrate-binding positions include 587–591 (RDAHQ) and Arg660. Asp588 lines the a divalent metal cation pocket. A divalent metal cation-binding residues include Lys756, His786, and His788. Residue Lys756 is modified to N6-carboxylysine. Thr921 lines the substrate pocket. Residues 1116-1191 (KADVGDSSQV…DGQDLVCKIT (76 aa)) enclose the Biotinyl-binding domain. Residue Lys1157 is modified to N6-biotinyllysine.

The cofactor is biotin. Zn(2+) serves as cofactor.

The protein localises to the cytoplasm. The catalysed reaction is hydrogencarbonate + pyruvate + ATP = oxaloacetate + ADP + phosphate + H(+). Its pathway is carbohydrate biosynthesis; gluconeogenesis. Functionally, pyruvate carboxylase catalyzes a 2-step reaction, involving the ATP-dependent carboxylation of the covalently attached biotin in the first step and the transfer of the carboxyl group to pyruvate in the second. The chain is Pyruvate carboxylase (pyc) from Aspergillus terreus (strain NIH 2624 / FGSC A1156).